The chain runs to 489 residues: Beta-glucosidase 14 (489 aa).

The signal sequence occupies residues 1–21 (MTSKYFSVLVFIILASNEVVA). An a beta-D-glucoside-binding site is contributed by Q49. N80 carries N-linked (GlcNAc...) asparagine glycosylation. A beta-D-glucoside contacts are provided by residues H153 and 198 to 199 (NE). The active-site Proton donor is the E199. The cysteines at positions 218 and 226 are disulfide-linked. N225 carries an N-linked (GlcNAc...) asparagine glycan. Y343 lines the a beta-D-glucoside pocket. A glycan (N-linked (GlcNAc...) asparagine) is linked at N357. A beta-D-glucoside is bound by residues E396, W441, 448-449 (EW), and F457. Catalysis depends on E396, which acts as the Nucleophile.

This sequence belongs to the glycosyl hydrolase 1 family.

It carries out the reaction Hydrolysis of terminal, non-reducing beta-D-glucosyl residues with release of beta-D-glucose.. The polypeptide is Beta-glucosidase 14 (Arabidopsis thaliana (Mouse-ear cress)).